A 382-amino-acid polypeptide reads, in one-letter code: Chaperone protein DnaJ (382 aa).

The 65-residue stretch at 6-70 (DYYEILGLPK…EKRAQYDRFG (65 aa)) folds into the J domain. The CR-type zinc-finger motif lies at 131 to 213 (GVRKDIDIPR…CGGAGRVRNK (83 aa)). Zn(2+) contacts are provided by Cys144, Cys147, Cys161, Cys164, Cys187, Cys190, Cys201, and Cys204. CXXCXGXG motif repeat units follow at residues 144–151 (CSTCSGTG), 161–168 (CPTCGGTG), 187–194 (CSTCHGRG), and 201–208 (CPVCGGAG). Residues 146–168 (TCSGTGAKPGTSPKRCPTCGGTG) form a disordered region. The tract at residues 348-382 (FENLSKGKKPQEEEKSKAEKHKKGIFEKVKDAFES) is disordered. The segment covering 371–382 (GIFEKVKDAFES) has biased composition (basic and acidic residues).

Belongs to the DnaJ family. In terms of assembly, homodimer. Requires Zn(2+) as cofactor.

The protein localises to the cytoplasm. In terms of biological role, participates actively in the response to hyperosmotic and heat shock by preventing the aggregation of stress-denatured proteins and by disaggregating proteins, also in an autonomous, DnaK-independent fashion. Unfolded proteins bind initially to DnaJ; upon interaction with the DnaJ-bound protein, DnaK hydrolyzes its bound ATP, resulting in the formation of a stable complex. GrpE releases ADP from DnaK; ATP binding to DnaK triggers the release of the substrate protein, thus completing the reaction cycle. Several rounds of ATP-dependent interactions between DnaJ, DnaK and GrpE are required for fully efficient folding. Also involved, together with DnaK and GrpE, in the DNA replication of plasmids through activation of initiation proteins. This is Chaperone protein DnaJ from Methanosarcina acetivorans (strain ATCC 35395 / DSM 2834 / JCM 12185 / C2A).